We begin with the raw amino-acid sequence, 300 residues long: 33 kDa chaperonin (300 aa).

Cystine bridges form between cysteine 235-cysteine 237 and cysteine 269-cysteine 272.

The protein belongs to the HSP33 family. Under oxidizing conditions two disulfide bonds are formed involving the reactive cysteines. Under reducing conditions zinc is bound to the reactive cysteines and the protein is inactive.

Its subcellular location is the cytoplasm. In terms of biological role, redox regulated molecular chaperone. Protects both thermally unfolding and oxidatively damaged proteins from irreversible aggregation. Plays an important role in the bacterial defense system toward oxidative stress. This is 33 kDa chaperonin from Pseudomonas fluorescens (strain SBW25).